Here is a 121-residue protein sequence, read N- to C-terminus: Large ribosomal subunit protein bL12 (121 aa).

It belongs to the bacterial ribosomal protein bL12 family. Homodimer. Part of the ribosomal stalk of the 50S ribosomal subunit. Forms a multimeric L10(L12)X complex, where L10 forms an elongated spine to which 2 to 4 L12 dimers bind in a sequential fashion. Binds GTP-bound translation factors.

Its function is as follows. Forms part of the ribosomal stalk which helps the ribosome interact with GTP-bound translation factors. Is thus essential for accurate translation. This Shewanella piezotolerans (strain WP3 / JCM 13877) protein is Large ribosomal subunit protein bL12.